Reading from the N-terminus, the 120-residue chain is Large ribosomal subunit protein bL19 (120 aa).

This sequence belongs to the bacterial ribosomal protein bL19 family.

This protein is located at the 30S-50S ribosomal subunit interface and may play a role in the structure and function of the aminoacyl-tRNA binding site. This chain is Large ribosomal subunit protein bL19, found in Rippkaea orientalis (strain PCC 8801 / RF-1) (Cyanothece sp. (strain PCC 8801)).